The sequence spans 169 residues: EP300-interacting inhibitor of differentiation 1 (169 aa).

Residues 31–50 (GRGARGPAPEEGPMEEEAGP) are disordered. The segment at 54-120 (RAQRGLFPEA…AGDALDGGFQ (67 aa)) is interaction with NR0B2. Residues 150–154 (LGCDE) carry the LXCXE motif motif.

As to quaternary structure, interacts via its LXCXE motif with the entire pocket region of RB1. Interacts with EP300, NR0B2 and TRIM27. In terms of tissue distribution, expressed in all adult tissues examined and during embryogenesis.

The protein localises to the nucleus. The protein resides in the cytoplasm. In terms of biological role, interacts with RB1 and EP300 and acts as a repressor of MYOD1 transactivation. Inhibits EP300 and CBP histone acetyltransferase activity. May be involved in coupling cell cycle exit to the transcriptional activation of genes required for cellular differentiation. May act as a candidate coinhibitory factor for NR0B2 that can be directly linked to transcription inhibitory mechanisms. In Mus musculus (Mouse), this protein is EP300-interacting inhibitor of differentiation 1.